Consider the following 326-residue polypeptide: Glyoxylate/hydroxypyruvate reductase B (326 aa).

Residues Arg237 and Glu266 contribute to the active site. Catalysis depends on His285, which acts as the Proton donor.

Belongs to the D-isomer specific 2-hydroxyacid dehydrogenase family. GhrB subfamily. In terms of assembly, homodimer.

The protein localises to the cytoplasm. It catalyses the reaction glycolate + NADP(+) = glyoxylate + NADPH + H(+). The catalysed reaction is (R)-glycerate + NAD(+) = 3-hydroxypyruvate + NADH + H(+). The enzyme catalyses (R)-glycerate + NADP(+) = 3-hydroxypyruvate + NADPH + H(+). Functionally, catalyzes the NADPH-dependent reduction of glyoxylate and hydroxypyruvate into glycolate and glycerate, respectively. This Yersinia pseudotuberculosis serotype O:3 (strain YPIII) protein is Glyoxylate/hydroxypyruvate reductase B.